The primary structure comprises 143 residues: Holo-[acyl-carrier-protein] synthase (143 aa).

The Mg(2+) site is built by Asp8 and Glu62.

The protein belongs to the P-Pant transferase superfamily. AcpS family. Mg(2+) serves as cofactor.

It is found in the cytoplasm. It catalyses the reaction apo-[ACP] + CoA = holo-[ACP] + adenosine 3',5'-bisphosphate + H(+). Its function is as follows. Transfers the 4'-phosphopantetheine moiety from coenzyme A to a Ser of acyl-carrier-protein. This chain is Holo-[acyl-carrier-protein] synthase, found in Cupriavidus metallidurans (strain ATCC 43123 / DSM 2839 / NBRC 102507 / CH34) (Ralstonia metallidurans).